A 243-amino-acid polypeptide reads, in one-letter code: Adenosine 5'-phosphosulfate reductase (243 aa).

The [4Fe-4S] cluster site is built by Cys126, Cys127, Cys209, and Cys212. Residue Cys235 is the Nucleophile; cysteine thiosulfonate intermediate of the active site.

Belongs to the PAPS reductase family. CysH subfamily. Requires [4Fe-4S] cluster as cofactor.

It localises to the cytoplasm. The catalysed reaction is [thioredoxin]-disulfide + sulfite + AMP + 2 H(+) = adenosine 5'-phosphosulfate + [thioredoxin]-dithiol. The protein operates within sulfur metabolism; hydrogen sulfide biosynthesis; sulfite from sulfate. In terms of biological role, catalyzes the formation of sulfite from adenosine 5'-phosphosulfate (APS) using thioredoxin as an electron donor. This chain is Adenosine 5'-phosphosulfate reductase, found in Staphylococcus epidermidis (strain ATCC 35984 / DSM 28319 / BCRC 17069 / CCUG 31568 / BM 3577 / RP62A).